The sequence spans 487 residues: Lysophospholipid acyltransferase 5 (487 aa).

Ala2 carries the N-acetylalanine modification. 6 consecutive transmembrane segments (helical) span residues 44–64, 67–87, 111–131, 178–198, 236–256, and 285–305; these read LIFSIFLGYPLALFYRHYLFY, SYLIHLFHAFSGLSIAYFNFG, ITAVFTTLCFQMAYLLAGYYY, ILGVPSLLEVAGFSYFYGAFL, LGLVYLVGYTLLSPHITEDYL, and VTCWLVTEGVCILSGLGFNGF. Residue Asn308 is glycosylated (N-linked (GlcNAc...) asparagine). Residues Asn338 and His374 contribute to the active site. Transmembrane regions (helical) follow at residues 364 to 384, 422 to 442, and 453 to 473; these read GLSLLFLALWHGLHSGYLICF, LVQQTIHWLFMGYSMTAFCLF, and SIYFLGHVFFLSLLFTLPYVY. The Di-lysine motif signature appears at 484–487; it reads KKRE.

The protein belongs to the membrane-bound acyltransferase family.

Its subcellular location is the endoplasmic reticulum membrane. It catalyses the reaction a 1-acyl-sn-glycero-3-phosphocholine + an acyl-CoA = a 1,2-diacyl-sn-glycero-3-phosphocholine + CoA. The enzyme catalyses a 1-acyl-sn-glycero-3-phosphoethanolamine + an acyl-CoA = a 1,2-diacyl-sn-glycero-3-phosphoethanolamine + CoA. It carries out the reaction a 1-acyl-sn-glycero-3-phospho-L-serine + an acyl-CoA = a 1,2-diacyl-sn-glycero-3-phospho-L-serine + CoA. The catalysed reaction is (9Z,12Z)-octadecadienoyl-CoA + a 1-acyl-sn-glycero-3-phosphocholine = 1-acyl-2-(9Z,12Z)-octadecadienoyl-sn-glycero-3-phosphocholine + CoA. It catalyses the reaction (5Z,8Z,11Z,14Z)-eicosatetraenoyl-CoA + a 1-acyl-sn-glycero-3-phosphocholine = 1-acyl-2-(5Z,8Z,11Z,14Z-eicosatetraenoyl)-sn-glycero-3-phosphocholine + CoA. The enzyme catalyses dodecanoyl-CoA + 1-hexadecanoyl-sn-glycero-3-phosphocholine = 1-hexadecanoyl-2-dodecanoyl-sn-glycero-3-phosphocholine + CoA. It carries out the reaction octadecanoyl-CoA + 1-hexadecanoyl-sn-glycero-3-phosphocholine = 1-hexadecanoyl-2-octadecanoyl-sn-glycero-3-phosphocholine + CoA. The catalysed reaction is 1-dodecanoyl-sn-glycero-3-phosphocholine + hexadecanoyl-CoA = 1-dodecanoyl-2-hexadecanoyl-sn-glycero-3-phosphocholine + CoA. It catalyses the reaction 1-tetradecanoyl-sn-glycero-3-phosphocholine + hexadecanoyl-CoA = 1-tetradecanoyl-2-hexadecanoyl-sn-glycero-3-phosphocholine + CoA. The enzyme catalyses 1-hexadecanoyl-sn-glycero-3-phosphocholine + hexadecanoyl-CoA = 1,2-dihexadecanoyl-sn-glycero-3-phosphocholine + CoA. It carries out the reaction 1-octadecanoyl-sn-glycero-3-phosphocholine + hexadecanoyl-CoA = 1-octadecanoyl-2-hexadecanoyl-sn-glycero-3-phosphocholine + CoA. The catalysed reaction is 1-(9Z-octadecenoyl)-sn-glycero-3-phosphocholine + hexadecanoyl-CoA = 1-(9Z-octadecenoyl)-2-hexadecanoyl-sn-glycero-3-phosphocholine + CoA. It catalyses the reaction (9Z)-hexadecenoyl-CoA + 1-hexadecanoyl-sn-glycero-3-phosphocholine = 1-hexadecanoyl-2-(9Z-hexadecenoyl)-sn-glycero-3-phosphocholine + CoA. The enzyme catalyses 1-hexadecanoyl-sn-glycero-3-phosphocholine + (9Z)-octadecenoyl-CoA = 1-hexadecanoyl-2-(9Z-octadecenoyl)-sn-glycero-3-phosphocholine + CoA. It carries out the reaction (9Z,12Z)-octadecadienoyl-CoA + 1-hexadecanoyl-sn-glycero-3-phosphocholine = 1-hexadecanoyl-2-(9Z,12Z-octadecadienoyl)-sn-glycero-3-phosphocholine + CoA. The catalysed reaction is 1-dodecanoyl-sn-glycero-3-phosphocholine + (5Z,8Z,11Z,14Z)-eicosatetraenoyl-CoA = 1-dodecanoyl-2-(5Z,8Z,11Z,14Z)-eicosatetraenoyl-sn-glycero-3-phosphocholine + CoA. It catalyses the reaction (5Z,8Z,11Z,14Z)-eicosatetraenoyl-CoA + 1-hexadecanoyl-sn-glycero-3-phosphocholine = 1-hexadecanoyl-2-(5Z,8Z,11Z,14Z-eicosatetraenoyl)-sn-glycero-3-phosphocholine + CoA. The enzyme catalyses 1-octadecanoyl-sn-glycero-3-phosphocholine + (5Z,8Z,11Z,14Z)-eicosatetraenoyl-CoA = 1-octadecanoyl-2-(5Z,8Z,11Z,14Z-eicosatetraenoyl)-sn-glycero-3-phosphocholine + CoA. It carries out the reaction 1-eicosanoyl-sn-glycero-3-phosphocholine + (5Z,8Z,11Z,14Z)-eicosatetraenoyl-CoA = 1-eicosanoyl-2-(5Z,8Z,11Z,14Z)-eicosatetraenoyl-sn-glycero-3-phosphocholine + CoA. The catalysed reaction is 1-(9Z-octadecenoyl)-sn-glycero-3-phosphocholine + (9Z)-octadecenoyl-CoA = 1,2-di-(9Z-octadecenoyl)-sn-glycero-3-phosphocholine + CoA. It catalyses the reaction 1-(9Z-octadecenoyl)-sn-glycero-3-phosphocholine + (9Z,12Z)-octadecadienoyl-CoA = 1-(9Z)-octadecenoyl-2-(9Z,12Z)-octadecadienoyl-sn-glycero-3-phosphocholine + CoA. The enzyme catalyses 1-(9Z-octadecenoyl)-sn-glycero-3-phosphocholine + (5Z,8Z,11Z,14Z)-eicosatetraenoyl-CoA = 1-(9Z)-octadecenoyl-2-(5Z,8Z,11Z,14Z)-icosatetraenoyl-sn-glycero-3-phosphocholine + CoA. It carries out the reaction a 1-acyl-sn-glycero-3-phosphoethanolamine + (9Z,12Z)-octadecadienoyl-CoA = 1-acyl-2-(9Z,12Z)-octadecadienoyl-sn-glycero-3-phosphoethanolamine + CoA. The catalysed reaction is 1-(9Z-octadecenoyl)-sn-glycero-3-phosphoethanolamine + (9Z,12Z)-octadecadienoyl-CoA = 1-(9Z)-octadecenoyl-2-(9Z,12Z)-octadecadienoyl-sn-glycero-3-phosphoethanolamine + CoA. It catalyses the reaction 1-(10Z-heptadecenoyl)-sn-glycero-3-phosphoethanolamine + (9Z,12Z)-octadecadienoyl-CoA = 1-(10Z-heptadecenoyl)-2-(9Z,12Z-octadecadienoyl)-sn-glycero-3-phosphoethanolamine + CoA. The enzyme catalyses a 1-acyl-sn-glycero-3-phosphoethanolamine + (5Z,8Z,11Z,14Z)-eicosatetraenoyl-CoA = 1-acyl-2-(5Z,8Z,11Z,14Z)-eicosatetraenoyl-sn-glycero-3-phosphoethanolamine + CoA. It carries out the reaction 1-hexadecanoyl-sn-glycero-3-phosphoethanolamine + (5Z,8Z,11Z,14Z)-eicosatetraenoyl-CoA = 1-hexadecanoyl-2-(5Z,8Z,11Z,14Z-eicosatetraenoyl)-sn-glycero-3-phosphoethanolamine + CoA. The catalysed reaction is 1-(9Z-octadecenoyl)-sn-glycero-3-phosphoethanolamine + (5Z,8Z,11Z,14Z)-eicosatetraenoyl-CoA = 1-(9Z)-octadecenoyl-2-(5Z,8Z,11Z,14Z)-eicosatetraenoyl-sn-glycero-3-phosphoethanolamine + CoA. It catalyses the reaction 1-(10Z-heptadecenoyl)-sn-glycero-3-phosphoethanolamine + (5Z,8Z,11Z,14Z)-eicosatetraenoyl-CoA = 1-(10Z-heptadecenoyl)-2-(5Z,8Z,11Z,14Z-eicosatetraenoyl)-sn-glycero-3-phosphoethanolamine + CoA. The enzyme catalyses a 1-O-(1Z-alkenyl)-sn-glycero-3-phosphoethanolamine + (5Z,8Z,11Z,14Z)-eicosatetraenoyl-CoA = 1-O-(1Z)-alkenyl-2-(5Z,8Z,11Z,14Z)-eicosatetraenoyl-sn-glycero-3-phosphoethanolamine + CoA. It carries out the reaction a 1-acyl-sn-glycero-3-phospho-L-serine + (9Z,12Z)-octadecadienoyl-CoA = 1-acyl-2-(9Z,12Z-octadecadienoyl)-sn-glycero-3-phospho-L-serine + CoA. The catalysed reaction is a 1-acyl-sn-glycero-3-phospho-L-serine + (5Z,8Z,11Z,14Z)-eicosatetraenoyl-CoA = 1-acyl-2-(5Z,8Z,11Z,14Z-eicosatetraenoyl)-sn-glycero-3-phospho-L-serine + CoA. It catalyses the reaction 1-hexadecanoyl-sn-glycero-3-phospho-L-serine + (9Z)-octadecenoyl-CoA = 1-hexadecanoyl-2-(9Z-octadecenoyl)-sn-glycero-3-phospho-L-serine + CoA. The enzyme catalyses 1-(9Z-octadecenoyl)-sn-glycero-3-phospho-L-serine + (9Z)-octadecenoyl-CoA = 1,2-di-(9Z)-octadecenoyl-sn-glycero-3-phospho-L-serine + CoA. It carries out the reaction 1-hexadecanoyl-sn-glycero-3-phospho-L-serine + (9Z,12Z)-octadecadienoyl-CoA = 1-hexadecanoyl-2-(9Z,12Z-octadecadienoyl)-sn-glycero-3-phospho-L-serine + CoA. The catalysed reaction is 1-(9Z-octadecenoyl)-sn-glycero-3-phospho-L-serine + (9Z,12Z)-octadecadienoyl-CoA = 1-(9Z-octadecenoyl)-2-(9Z,12Z-octadienoyl)-sn-glycero-3-phospho-L-serine + CoA. It catalyses the reaction 1-hexadecanoyl-sn-glycero-3-phospho-L-serine + (5Z,8Z,11Z,14Z)-eicosatetraenoyl-CoA = 1-hexadecanoyl-2-(5Z,8Z,11Z,14Z-eicosatetraenoyl)-sn-glycero-3-phospho-L-serine + CoA. The enzyme catalyses 1-(9Z-octadecenoyl)-sn-glycero-3-phospho-L-serine + (5Z,8Z,11Z,14Z)-eicosatetraenoyl-CoA = 1-(9Z-octadecenoyl)-2-(5Z,8Z,11Z,14Z-eicosatetraenoyl)-sn-glycero-3-phospho-L-serine + CoA. It functions in the pathway lipid metabolism; phospholipid metabolism. In terms of biological role, lysophospholipid O-acyltransferase (LPLAT) that catalyzes the reacylation step of the phospholipid remodeling process also known as the Lands cycle. Catalyzes transfer of the fatty acyl chain from fatty acyl-CoA to 1-acyl lysophospholipid to form various classes of phospholipids. Converts 1-acyl lysophosphatidylcholine (LPC) into phosphatidylcholine (PC) (LPCAT activity), 1-acyl lysophosphatidylserine (LPS) into phosphatidylserine (PS) (LPSAT activity) and 1-acyl lysophosphatidylethanolamine (LPE) into phosphatidylethanolamine (PE) (LPEAT activity). Favors polyunsaturated fatty acyl-CoAs as acyl donors compared to saturated fatty acyl-CoAs. Has higher activity for LPC acyl acceptors compared to LPEs and LPSs. Can also transfer the fatty acyl chain from fatty acyl-CoA to 1-O-alkyl lysophospholipid or 1-O-alkenyl lysophospholipid with lower efficiency. Acts as a major LPC O-acyltransferase in liver and intestine. As a component of the liver X receptor/NR1H3 or NR1H2 signaling pathway, mainly catalyzes the incorporation of arachidonate into PCs of endoplasmic reticulum (ER) membranes, increasing membrane dynamics and enabling triacylglycerols transfer to nascent very low-density lipoprotein (VLDL) particles. Promotes processing of sterol regulatory protein SREBF1 in hepatocytes, likely by facilitating the translocation of SREBF1-SCAP complex from ER to the Golgi apparatus. Participates in mechanisms by which the liver X receptor/NR1H3 or NR1H2 signaling pathway counteracts lipid-induced ER stress response and inflammation. Down-regulates hepatic inflammation by limiting arachidonic acid availability for synthesis of inflammatory eicosanoids, such as prostaglandins. In enterocytes, acts as a component of a gut-brain feedback loop that coordinates dietary lipid absorption and food intake. Regulates the abundance of PCs containing linoleate and arachidonate in enterocyte membranes, enabling passive diffusion of fatty acids and cholesterol across the membrane for efficient chylomicron assembly. In the intestinal crypt, acts as a component of dietary-responsive phospholipid-cholesterol axis, regulating the biosynthesis of cholesterol and its mitogenic effects on intestinal stem cells. The sequence is that of Lysophospholipid acyltransferase 5 (Lpcat3) from Rattus norvegicus (Rat).